The primary structure comprises 37 residues: MKVRPSVKPICEKCKVIKRKGKVMVICDNPKHKQRQG.

Belongs to the bacterial ribosomal protein bL36 family.

The chain is Large ribosomal subunit protein bL36 from Staphylococcus epidermidis (strain ATCC 35984 / DSM 28319 / BCRC 17069 / CCUG 31568 / BM 3577 / RP62A).